The sequence spans 1374 residues: DNA-directed RNA polymerase subunit beta (1374 aa).

The protein belongs to the RNA polymerase beta chain family. In terms of assembly, the RNAP catalytic core consists of 2 alpha, 1 beta, 1 beta' and 1 omega subunit. When a sigma factor is associated with the core the holoenzyme is formed, which can initiate transcription.

The catalysed reaction is RNA(n) + a ribonucleoside 5'-triphosphate = RNA(n+1) + diphosphate. DNA-dependent RNA polymerase catalyzes the transcription of DNA into RNA using the four ribonucleoside triphosphates as substrates. This is DNA-directed RNA polymerase subunit beta from Rhodopseudomonas palustris (strain BisB5).